The primary structure comprises 422 residues: Protein king tubby 2 (422 aa).

The segment at 49 to 169 is disordered; it reads PSNPDQIISS…ASGHNDAEGD (121 aa). Residues 57–81 are compositionally biased toward low complexity; it reads SSGSPTTVTATGTTTGSVTTTPTSP.

Belongs to the TUB family.

It localises to the cytoplasm. The protein localises to the nucleus. This chain is Protein king tubby 2 (king-tubby2), found in Culex quinquefasciatus (Southern house mosquito).